The following is a 998-amino-acid chain: Antigenic heat-stable 120 kDa protein (998 aa).

The interval Gly-1–Gln-69 is disordered. The span at Glu-12–Ile-21 shows a compositional bias: acidic residues. Over residues Thr-46–Asp-68 the composition is skewed to polar residues.

The protein localises to the cytoplasm. The polypeptide is Antigenic heat-stable 120 kDa protein (sca4) (Rickettsia akari).